The primary structure comprises 1023 residues: PVRSITRTFASGKTEKVIFQALKELGLPSGKNDEIEPAAFTYEKFYELTQKICPRTDIEDLFKKINGDKTDYLTVDQLVSFLNEHQRDPRLNEILFPFYDAKRAMQIIEMYEPDEDLKKQGLISSDGFCRYLMSDENAPVFLDRLELYQEMDHPLAHYFISSSHNTYLTGRQFGGKSSVEMYRQVLLAGCRCVELDCWDGKGEDQEPIITHGKAMCTDILFKDVIQAIKETAFVTSEYPVILSFENHCSKYQQYKMSKYCEDLFGDLLLKQALESHPLEPGRPLPSPNDLKRKILIKKQTTETEVEKKQLEALKSMMEAGESAAPVNMLEDDNEEEIESAEQEEEAHPEYKYGNELSADDLGHKEAIANSVKKASDDLEHENSKKGLVTVEDEQAWMASYKYVGATTNIHPYLSTMINYAQPVKFQGFHVAEERNIHYNMSSFNESVGLGYLKTHAIEFVNYNKRQMSRIYPKGGRVDSSNYMPQIFWNSGCQMVSLNYQTPDLAMQLNQGKFEYNGSCGYLLKPDFMRRPDRTFDPFSETPVDGVIAATCSVQVISGQFLSDKKIGTYVEVDMYGLPTDTIRKEFRTRMVMNNGLNPVYNEESFVFRKVILPDLAVLRIAVYDDNNKLIGQRILPLDGLQAGYRHISLRNEGNKPLSLPTIFCNIVLKTYVPDGFGDIVDALSDPKKFLSITEKRADQMRAMGIETSDIADVPSDTSKNDKKGKANTAKANVTPQSSSELRPTTTAALGAGLEAKKGIELIPQVRIEDLKQMKAYLKHLKKQQKELSSLKKKHAKEHSTMQKLHCTQVDKIVAQYDKEKLTHEKILEKAMKKKGGSNCLEMKKETEIKIQTLTSDHKSKVKEIVAQHTKEWSDMINTHSAEEQEIRDLLLSQQCELLRKLLISAHEQQTQQLKLSHDRESKEMRAHQAKISMENSKAISQDKSIKNKAERERRVRELNSSNTKKFLEERKRLAMKQSKEMDQLKKVQLEHLEFVEKQNEQAKEMQQMVKLEAEMDRRPATVV.

A PI-PLC X-box domain is found at 149-299 (QEMDHPLAHY…LKRKILIKKQ (151 aa)). Catalysis depends on residues His-164 and His-211. The region spanning 413–529 (LSTMINYAQP…GYLLKPDFMR (117 aa)) is the PI-PLC Y-box domain. Residues 532–657 (DRTFDPFSET…SLRNEGNKPL (126 aa)) form the C2 domain. Disordered stretches follow at residues 711–742 (ADVP…SELR) and 930–958 (KISM…VREL). Composition is skewed to polar residues over residues 729 to 742 (AKAN…SELR) and 933 to 942 (MENSKAISQD). The residue at position 734 (Thr-734) is a Phosphothreonine. The span at 943-957 (KSIKNKAERERRVRE) shows a compositional bias: basic and acidic residues.

It depends on Ca(2+) as a cofactor. In terms of processing, the N-terminus is blocked. In terms of tissue distribution, preferentially expressed in the retina.

It localises to the cell membrane. It catalyses the reaction a 1,2-diacyl-sn-glycero-3-phospho-(1D-myo-inositol-4,5-bisphosphate) + H2O = 1D-myo-inositol 1,4,5-trisphosphate + a 1,2-diacyl-sn-glycerol + H(+). It carries out the reaction a 1,2-diacyl-sn-glycero-3-phospho-(1D-myo-inositol) + H2O = 1D-myo-inositol 1-phosphate + a 1,2-diacyl-sn-glycerol + H(+). Its function is as follows. Activated phosphatidylinositol-specific phospholipase C enzymes catalyze the production of the second messenger molecules diacylglycerol (DAG) and inositol 1,4,5-trisphosphate (IP3) involved in G-protein coupled receptor signaling pathways. PLCB4 is a direct effector of the endothelin receptor signaling pathway that plays an essential role in lower jaw and middle ear structures development. The chain is 1-phosphatidylinositol 4,5-bisphosphate phosphodiesterase beta-4 (PLCB4) from Bos taurus (Bovine).